A 146-amino-acid chain; its full sequence is uncharacterized protein (146 aa).

Residues 1–120 (MTDKFDANDE…TILKWEKNMD (120 aa)) enclose the N-acetyltransferase domain.

Belongs to the acetyltransferase family.

This is an uncharacterized protein from Streptococcus pyogenes serotype M6 (strain ATCC BAA-946 / MGAS10394).